Reading from the N-terminus, the 144-residue chain is D-aminoacyl-tRNA deacylase (144 aa).

The short motif at 136–137 is the Gly-cisPro motif, important for rejection of L-amino acids element; it reads GP.

Belongs to the DTD family. As to quaternary structure, homodimer.

It is found in the cytoplasm. It catalyses the reaction glycyl-tRNA(Ala) + H2O = tRNA(Ala) + glycine + H(+). The catalysed reaction is a D-aminoacyl-tRNA + H2O = a tRNA + a D-alpha-amino acid + H(+). In terms of biological role, an aminoacyl-tRNA editing enzyme that deacylates mischarged D-aminoacyl-tRNAs. Also deacylates mischarged glycyl-tRNA(Ala), protecting cells against glycine mischarging by AlaRS. Acts via tRNA-based rather than protein-based catalysis; rejects L-amino acids rather than detecting D-amino acids in the active site. By recycling D-aminoacyl-tRNA to D-amino acids and free tRNA molecules, this enzyme counteracts the toxicity associated with the formation of D-aminoacyl-tRNA entities in vivo and helps enforce protein L-homochirality. The protein is D-aminoacyl-tRNA deacylase of Corynebacterium glutamicum (strain R).